We begin with the raw amino-acid sequence, 149 residues long: Protein FAM72A (149 aa).

This sequence belongs to the FAM72 family. As to quaternary structure, interacts with UNG. Expressed at high levels in stomach and also in kidney and, at low levels, in heart (at protein level). In the stomach, highly expressed in foveolar cells, parietal cells and chief cells (at protein level). In kidney, expressed in endothelial cells, mesangial and epithelial cells (parietal and visceral epithelium) around glomerulus (at protein level).

It localises to the cytoplasm. It is found in the mitochondrion. May play a role in the regulation of cellular reactive oxygen species metabolism. May participate in cell growth regulation. This chain is Protein FAM72A (FAM72A), found in Bos taurus (Bovine).